A 342-amino-acid chain; its full sequence is Uroporphyrinogen decarboxylase (342 aa).

Residues 21–25 (RQAGR), Asp-71, Tyr-148, Ser-203, and His-316 contribute to the substrate site.

Belongs to the uroporphyrinogen decarboxylase family. Homodimer.

It localises to the cytoplasm. The enzyme catalyses uroporphyrinogen III + 4 H(+) = coproporphyrinogen III + 4 CO2. It participates in porphyrin-containing compound metabolism; protoporphyrin-IX biosynthesis; coproporphyrinogen-III from 5-aminolevulinate: step 4/4. In terms of biological role, catalyzes the decarboxylation of four acetate groups of uroporphyrinogen-III to yield coproporphyrinogen-III. In Campylobacter curvus (strain 525.92), this protein is Uroporphyrinogen decarboxylase.